Here is a 333-residue protein sequence, read N- to C-terminus: Fructose-1,6-bisphosphatase class 1 (333 aa).

Positions 92, 113, 115, and 116 each coordinate Mg(2+). Residues 116–119 (DGSS), asparagine 209, tyrosine 242, and lysine 272 contribute to the substrate site. Residue glutamate 278 coordinates Mg(2+).

Belongs to the FBPase class 1 family. Homotetramer. Mg(2+) is required as a cofactor.

The protein resides in the cytoplasm. It catalyses the reaction beta-D-fructose 1,6-bisphosphate + H2O = beta-D-fructose 6-phosphate + phosphate. It functions in the pathway carbohydrate biosynthesis; Calvin cycle. This Chlorobium luteolum (strain DSM 273 / BCRC 81028 / 2530) (Pelodictyon luteolum) protein is Fructose-1,6-bisphosphatase class 1.